Here is a 456-residue protein sequence, read N- to C-terminus: Cysteine--tRNA ligase (456 aa).

Residue cysteine 28 participates in Zn(2+) binding. A 'HIGH' region motif is present at residues 30-40 (MTVYDYCHLGH). Residues cysteine 209, histidine 234, and glutamate 238 each contribute to the Zn(2+) site. Residues 266–270 (KMSKS) carry the 'KMSKS' region motif. Residue lysine 269 coordinates ATP.

Belongs to the class-I aminoacyl-tRNA synthetase family. As to quaternary structure, monomer. Zn(2+) is required as a cofactor.

The protein localises to the cytoplasm. It carries out the reaction tRNA(Cys) + L-cysteine + ATP = L-cysteinyl-tRNA(Cys) + AMP + diphosphate. In Dechloromonas aromatica (strain RCB), this protein is Cysteine--tRNA ligase.